The chain runs to 661 residues: DNA ligase (661 aa).

Residues 31 to 35, 79 to 80, and Glu112 each bind NAD(+); these read DKEYD and SL. The active-site N6-AMP-lysine intermediate is the Lys114. Residues Arg135, Glu169, Lys281, and Lys305 each coordinate NAD(+). The Zn(2+) site is built by Cys398, Cys401, Cys414, and Cys420. The region spanning 578-661 is the BRCT domain; sequence QQENIFLGKT…ISEAEFEAML (84 aa).

It belongs to the NAD-dependent DNA ligase family. LigA subfamily. Requires Mg(2+) as cofactor. The cofactor is Mn(2+).

The enzyme catalyses NAD(+) + (deoxyribonucleotide)n-3'-hydroxyl + 5'-phospho-(deoxyribonucleotide)m = (deoxyribonucleotide)n+m + AMP + beta-nicotinamide D-nucleotide.. DNA ligase that catalyzes the formation of phosphodiester linkages between 5'-phosphoryl and 3'-hydroxyl groups in double-stranded DNA using NAD as a coenzyme and as the energy source for the reaction. It is essential for DNA replication and repair of damaged DNA. The chain is DNA ligase from Alkaliphilus oremlandii (strain OhILAs) (Clostridium oremlandii (strain OhILAs)).